The following is a 502-amino-acid chain: ATP synthase subunit alpha 1/3 (502 aa).

Residue 169-176 (GDRQTGKT) coordinates ATP.

It belongs to the ATPase alpha/beta chains family. As to quaternary structure, F-type ATPases have 2 components, CF(1) - the catalytic core - and CF(0) - the membrane proton channel. CF(1) has five subunits: alpha(3), beta(3), gamma(1), delta(1), epsilon(1). CF(0) has three main subunits: a(1), b(2) and c(9-12). The alpha and beta chains form an alternating ring which encloses part of the gamma chain. CF(1) is attached to CF(0) by a central stalk formed by the gamma and epsilon chains, while a peripheral stalk is formed by the delta and b chains.

Its subcellular location is the cell inner membrane. The enzyme catalyses ATP + H2O + 4 H(+)(in) = ADP + phosphate + 5 H(+)(out). Functionally, produces ATP from ADP in the presence of a proton gradient across the membrane. The alpha chain is a regulatory subunit. This is ATP synthase subunit alpha 1/3 from Syntrophotalea carbinolica (strain DSM 2380 / NBRC 103641 / GraBd1) (Pelobacter carbinolicus).